Reading from the N-terminus, the 237-residue chain is Large ribosomal subunit protein uL1 (237 aa).

It belongs to the universal ribosomal protein uL1 family. As to quaternary structure, part of the 50S ribosomal subunit.

In terms of biological role, binds directly to 23S rRNA. The L1 stalk is quite mobile in the ribosome, and is involved in E site tRNA release. Protein L1 is also a translational repressor protein, it controls the translation of the L11 operon by binding to its mRNA. This chain is Large ribosomal subunit protein uL1, found in Myxococcus xanthus (strain DK1622).